Reading from the N-terminus, the 180-residue chain is Large ribosomal subunit protein uL6 (180 aa).

Belongs to the universal ribosomal protein uL6 family. In terms of assembly, part of the 50S ribosomal subunit.

Its function is as follows. This protein binds to the 23S rRNA, and is important in its secondary structure. It is located near the subunit interface in the base of the L7/L12 stalk, and near the tRNA binding site of the peptidyltransferase center. The sequence is that of Large ribosomal subunit protein uL6 from Anaeromyxobacter sp. (strain K).